Here is a 350-residue protein sequence, read N- to C-terminus: Ferredoxin--NADP reductase (350 aa).

FAD-binding residues include D49, Q57, Y62, V102, F136, D303, and T344.

The protein belongs to the ferredoxin--NADP reductase type 2 family. As to quaternary structure, homodimer. The cofactor is FAD.

The catalysed reaction is 2 reduced [2Fe-2S]-[ferredoxin] + NADP(+) + H(+) = 2 oxidized [2Fe-2S]-[ferredoxin] + NADPH. This is Ferredoxin--NADP reductase from Granulibacter bethesdensis (strain ATCC BAA-1260 / CGDNIH1).